We begin with the raw amino-acid sequence, 450 residues long: Asparagine--tRNA ligase (450 aa).

Belongs to the class-II aminoacyl-tRNA synthetase family. Homodimer.

The protein localises to the cytoplasm. The catalysed reaction is tRNA(Asn) + L-asparagine + ATP = L-asparaginyl-tRNA(Asn) + AMP + diphosphate + H(+). The sequence is that of Asparagine--tRNA ligase from Enterococcus faecalis (strain ATCC 700802 / V583).